A 237-amino-acid polypeptide reads, in one-letter code: Aspartate/glutamate leucyltransferase (237 aa).

The protein belongs to the R-transferase family. Bpt subfamily.

It is found in the cytoplasm. It catalyses the reaction N-terminal L-glutamyl-[protein] + L-leucyl-tRNA(Leu) = N-terminal L-leucyl-L-glutamyl-[protein] + tRNA(Leu) + H(+). It carries out the reaction N-terminal L-aspartyl-[protein] + L-leucyl-tRNA(Leu) = N-terminal L-leucyl-L-aspartyl-[protein] + tRNA(Leu) + H(+). Its function is as follows. Functions in the N-end rule pathway of protein degradation where it conjugates Leu from its aminoacyl-tRNA to the N-termini of proteins containing an N-terminal aspartate or glutamate. The protein is Aspartate/glutamate leucyltransferase of Marinobacter nauticus (strain ATCC 700491 / DSM 11845 / VT8) (Marinobacter aquaeolei).